A 582-amino-acid polypeptide reads, in one-letter code: 15-cis-phytoene desaturase, chloroplastic/chromoplastic (582 aa).

The N-terminal 93 residues, 1 to 93 (MNLLGSISTG…ELENTINFLE (93 aa)), are a transit peptide targeting the chloroplast and chromoplast. FAD-binding positions include A121, 140–141 (EA), K148, 165–166 (HI), and Y171. A substrate-binding site is contributed by R306. D537 contacts FAD. A545 is a binding site for substrate. Position 547 (M547) interacts with FAD.

This sequence belongs to the carotenoid/retinoid oxidoreductase family. Homotetramer. It depends on FAD as a cofactor. In terms of tissue distribution, expressed in flower buds and lips. Lower expression in leaves and roots.

The protein resides in the plastid. Its subcellular location is the chloroplast. The protein localises to the chromoplast. It localises to the membrane. It catalyses the reaction 2 a plastoquinone + 15-cis-phytoene = 9,9',15-tri-cis-zeta-carotene + 2 a plastoquinol. It functions in the pathway carotenoid biosynthesis; lycopene biosynthesis. Converts phytoene into zeta-carotene via the intermediary of phytofluene by the symmetrical introduction of two double bonds at the C-11 and C-11' positions of phytoene with a concomitant isomerization of two neighboring double bonds at the C9 and C9' positions from trans to cis. This chain is 15-cis-phytoene desaturase, chloroplastic/chromoplastic (PDS), found in Oncidium hybrid cultivar (Orchid).